The chain runs to 382 residues: Homeobox protein bagpipe (382 aa).

3 disordered regions span residues 27 to 66, 144 to 178, and 314 to 382; these read NDIL…SKSP, TSND…KKRS, and QPIP…VEID. Positions 48–62 are enriched in basic and acidic residues; the sequence is EPEKLKPSSDRERSI. A compositionally biased stretch (low complexity) spans 158-170; it reads SSPSESPLSHDGS. Positions 175–234 form a DNA-binding region, homeobox; sequence KKRSRAAFSHAQVFELERRFAQQRYLSGPERSEMAKSLRLTETQVKIWFQNRRYKTKRKQ. Positions 321 to 335 are enriched in low complexity; that stretch reads QSSSFVTASSASSSP. Over residues 373-382 the composition is skewed to acidic residues; sequence EDVDENVEID.

The protein belongs to the NK-3 homeobox family. In terms of tissue distribution, is expressed in a segmented pattern in visceral muscle and in a subset of cardiac muscles. Loss of activity results in segmental gaps in midgut visceral muscle.

The protein resides in the nucleus. Its function is as follows. Involved in the determination of cell fates in the dorsal mesoderm. This is Homeobox protein bagpipe (bap) from Drosophila melanogaster (Fruit fly).